A 1201-amino-acid polypeptide reads, in one-letter code: DNA-directed RNA polymerase subunit beta' (1201 aa).

4 residues coordinate Zn(2+): Cys-60, Cys-62, Cys-75, and Cys-78. Positions 449, 451, and 453 each coordinate Mg(2+). Residues Cys-818, Cys-892, Cys-899, and Cys-902 each coordinate Zn(2+).

It belongs to the RNA polymerase beta' chain family. In terms of assembly, the RNAP catalytic core consists of 2 alpha, 1 beta, 1 beta' and 1 omega subunit. When a sigma factor is associated with the core the holoenzyme is formed, which can initiate transcription. Mg(2+) is required as a cofactor. Requires Zn(2+) as cofactor.

It catalyses the reaction RNA(n) + a ribonucleoside 5'-triphosphate = RNA(n+1) + diphosphate. DNA-dependent RNA polymerase catalyzes the transcription of DNA into RNA using the four ribonucleoside triphosphates as substrates. The chain is DNA-directed RNA polymerase subunit beta' from Listeria welshimeri serovar 6b (strain ATCC 35897 / DSM 20650 / CCUG 15529 / CIP 8149 / NCTC 11857 / SLCC 5334 / V8).